The primary structure comprises 112 residues: Cell cycle protein GpsB (112 aa).

Residues 38 to 72 (IKDYEAFHKEFEQLKQQNARLKRELEEQKLAATQV) are a coiled coil.

This sequence belongs to the GpsB family. Forms polymers through the coiled coil domains. Interacts with PBP1, MreC and EzrA.

It is found in the cytoplasm. Divisome component that associates with the complex late in its assembly, after the Z-ring is formed, and is dependent on DivIC and PBP2B for its recruitment to the divisome. Together with EzrA, is a key component of the system that regulates PBP1 localization during cell cycle progression. Its main role could be the removal of PBP1 from the cell pole after pole maturation is completed. Also contributes to the recruitment of PBP1 to the division complex. Not essential for septum formation. In Bacillus anthracis (strain A0248), this protein is Cell cycle protein GpsB.